Consider the following 100-residue polypeptide: Internal protein II (100 aa).

The propeptide occupies 1-10 (MKTYQEFIAE).

Its function is as follows. Internal protein II, which has a histone-like character, binds weakly to other components of the assembly core during an early stage of bacteriophage head morphogenesis. This chain is Internal protein II (ipi2), found in Enterobacteria phage T4 (Bacteriophage T4).